The chain runs to 133 residues: NADPH-dependent 7-cyano-7-deazaguanine reductase (133 aa).

Cysteine 49 serves as the catalytic Thioimide intermediate. The active-site Proton donor is aspartate 56. Residues 71–73 (IEL) and 90–91 (HE) contribute to the substrate site.

This sequence belongs to the GTP cyclohydrolase I family. QueF type 1 subfamily.

Its subcellular location is the cytoplasm. The catalysed reaction is 7-aminomethyl-7-carbaguanine + 2 NADP(+) = 7-cyano-7-deazaguanine + 2 NADPH + 3 H(+). The protein operates within tRNA modification; tRNA-queuosine biosynthesis. In terms of biological role, catalyzes the NADPH-dependent reduction of 7-cyano-7-deazaguanine (preQ0) to 7-aminomethyl-7-deazaguanine (preQ1). This is NADPH-dependent 7-cyano-7-deazaguanine reductase from Leptospira borgpetersenii serovar Hardjo-bovis (strain JB197).